Here is an 874-residue protein sequence, read N- to C-terminus: Alanine--tRNA ligase (874 aa).

Residues His562, His566, Cys665, and His669 each contribute to the Zn(2+) site.

This sequence belongs to the class-II aminoacyl-tRNA synthetase family. Zn(2+) is required as a cofactor.

It is found in the cytoplasm. It carries out the reaction tRNA(Ala) + L-alanine + ATP = L-alanyl-tRNA(Ala) + AMP + diphosphate. Functionally, catalyzes the attachment of alanine to tRNA(Ala) in a two-step reaction: alanine is first activated by ATP to form Ala-AMP and then transferred to the acceptor end of tRNA(Ala). Also edits incorrectly charged Ser-tRNA(Ala) and Gly-tRNA(Ala) via its editing domain. This is Alanine--tRNA ligase from Pseudomonas entomophila (strain L48).